Consider the following 41-residue polypeptide: MKVRNSLKSLRGRHRDNQLVRRKGRVYIINKTQKRYKARQG.

It belongs to the bacterial ribosomal protein bL36 family.

The protein is Large ribosomal subunit protein bL36 of Methylocella silvestris (strain DSM 15510 / CIP 108128 / LMG 27833 / NCIMB 13906 / BL2).